Reading from the N-terminus, the 865-residue chain is Cadherin-related family member 1 (865 aa).

The first 23 residues, 1-23 (MKHVRHFIPSLFLSLVHVCLVQA), serve as a signal peptide directing secretion. The Extracellular segment spans residues 24-705 (NYAPYFFDNG…TKDNPMKALG (682 aa)). 6 Cadherin domains span residues 38–137 (NGNM…SPEF), 138–249 (INTP…PPMF), 250–356 (IGTP…PPTF), 362–475 (PQNR…VPKF), 476–579 (SSDY…SPEF), and 571–690 (DVND…GPMA). Residues 706–726 (VLAGVMGIMVLITIMISTAMF) traverse the membrane as a helical segment. Topologically, residues 727 to 865 (WRNKRSNKIM…RNASMGEPHI (139 aa)) are cytoplasmic. The tract at residues 782-810 (ENSNNNVQAAPVPPAAPLPPPPPALAASG) is disordered. The segment covering 792-805 (PVPPAAPLPPPPPA) has biased composition (pro residues).

The protein localises to the membrane. In terms of biological role, potential calcium-dependent cell-adhesion protein. This is Cadherin-related family member 1 (CDHR1) from Gallus gallus (Chicken).